A 200-amino-acid polypeptide reads, in one-letter code: Probable GTP-binding protein EngB (200 aa).

In terms of domain architecture, EngB-type G spans 26–200; that stretch reads SIPEIAIAGR…IYEIAQCIKK (175 aa). GTP contacts are provided by residues 34 to 41, 61 to 65, 80 to 83, 147 to 150, and 176 to 179; these read GRSNVGKS, GCTKQ, DLPG, TKID, and VISA. Mg(2+) contacts are provided by serine 41 and threonine 63.

Belongs to the TRAFAC class TrmE-Era-EngA-EngB-Septin-like GTPase superfamily. EngB GTPase family. The cofactor is Mg(2+).

Its function is as follows. Necessary for normal cell division and for the maintenance of normal septation. The protein is Probable GTP-binding protein EngB of Ehrlichia canis (strain Jake).